A 213-amino-acid chain; its full sequence is Holliday junction branch migration complex subunit RuvA (213 aa).

Residues 1-63 (MISFLRGTVA…EDSMTLFGFA (63 aa)) are domain I. Positions 64 to 140 (DDDEREVFEV…LVPHGTAPAA (77 aa)) are domain II. The tract at residues 140–144 (AATTA) is flexible linker. Residues 145-213 (AEASWKPQVV…RAGNRVGSRG (69 aa)) form a domain III region.

It belongs to the RuvA family. Homotetramer. Forms an RuvA(8)-RuvB(12)-Holliday junction (HJ) complex. HJ DNA is sandwiched between 2 RuvA tetramers; dsDNA enters through RuvA and exits via RuvB. An RuvB hexamer assembles on each DNA strand where it exits the tetramer. Each RuvB hexamer is contacted by two RuvA subunits (via domain III) on 2 adjacent RuvB subunits; this complex drives branch migration. In the full resolvosome a probable DNA-RuvA(4)-RuvB(12)-RuvC(2) complex forms which resolves the HJ.

It localises to the cytoplasm. Functionally, the RuvA-RuvB-RuvC complex processes Holliday junction (HJ) DNA during genetic recombination and DNA repair, while the RuvA-RuvB complex plays an important role in the rescue of blocked DNA replication forks via replication fork reversal (RFR). RuvA specifically binds to HJ cruciform DNA, conferring on it an open structure. The RuvB hexamer acts as an ATP-dependent pump, pulling dsDNA into and through the RuvAB complex. HJ branch migration allows RuvC to scan DNA until it finds its consensus sequence, where it cleaves and resolves the cruciform DNA. The sequence is that of Holliday junction branch migration complex subunit RuvA from Pseudarthrobacter chlorophenolicus (strain ATCC 700700 / DSM 12829 / CIP 107037 / JCM 12360 / KCTC 9906 / NCIMB 13794 / A6) (Arthrobacter chlorophenolicus).